We begin with the raw amino-acid sequence, 505 residues long: Phosphoethanolamine N-methyltransferase (505 aa).

The S-adenosyl-L-homocysteine site is built by Gly76, Arg81, Asp97, Asp122, Val123, and Asn141. Phosphocholine is bound by residues Ser174, Ser179, Gly180, Arg184, and Tyr191. N-methylethanolamine phosphate is bound by residues 260-261 (QY) and Tyr269. Tyr269 serves as a coordination point for phosphocholine. Positions 278, 279, 305, 327, 353, 354, and 370 each coordinate S-adenosyl-L-homocysteine. 5 residues coordinate phosphocholine: Tyr401, Tyr415, Arg419, Tyr421, and Lys487. N-methylethanolamine phosphate-binding positions include Tyr401, Tyr415, 419–421 (RGY), and Lys487.

This sequence belongs to the class I-like SAM-binding methyltransferase superfamily. PEAMT family.

The enzyme catalyses phosphoethanolamine + S-adenosyl-L-methionine = N-methylethanolamine phosphate + S-adenosyl-L-homocysteine + H(+). It carries out the reaction N-methylethanolamine phosphate + S-adenosyl-L-methionine = N,N-dimethylethanolamine phosphate + S-adenosyl-L-homocysteine + H(+). It catalyses the reaction N,N-dimethylethanolamine phosphate + S-adenosyl-L-methionine = phosphocholine + S-adenosyl-L-homocysteine + H(+). Its pathway is phospholipid metabolism; phosphatidylcholine biosynthesis; phosphocholine from phosphoethanolamine: step 1/1. Inhibited by phosphatidic acid. In terms of biological role, involved in phosphocholine biosynthesis. Catalyzes the N-methylation of phosphoethanolamine, phosphomonomethylethanolamine and phosphodimethylethanolamine, the three methylation steps required to convert phosphoethanolamine to phosphocholine (PC). This is Phosphoethanolamine N-methyltransferase from Triticum aestivum (Wheat).